The sequence spans 382 residues: Protein phosphatase 1A (382 aa).

G2 carries the N-myristoyl glycine lipid modification. The region spanning R23–F291 is the PPM-type phosphatase domain. Mn(2+)-binding residues include D60, G61, D239, and D282. Residues S375 and S377 each carry the phosphoserine modification.

Belongs to the PP2C family. Monomer. Interacts with SMAD2; the interaction dephosphorylates SMAD2 in its C-terminal SXS motif resulting in disruption of the SMAD2/SMAD4 complex, SMAD2 nuclear export and termination of the TGF-beta-mediated signaling. Interacts with SMAD2; the interaction dephosphorylates SMAD2 in its C-terminal SXS motif resulting in disruption of the SMAD2/SMAD4 complex, SMAD2 nuclear export and termination of the TGF-beta-mediated signaling. Interacts with the phosphorylated form of IKBKB/IKKB. Mg(2+) is required as a cofactor. The cofactor is Mn(2+). In terms of processing, N-myristoylation is essential for the recognition of its substrates for dephosphorylation.

The protein localises to the nucleus. The protein resides in the cytoplasm. Its subcellular location is the cytosol. It is found in the membrane. It catalyses the reaction O-phospho-L-seryl-[protein] + H2O = L-seryl-[protein] + phosphate. The catalysed reaction is O-phospho-L-threonyl-[protein] + H2O = L-threonyl-[protein] + phosphate. Enzyme with a broad specificity. Negatively regulates TGF-beta signaling through dephosphorylating SMAD2 and SMAD3, resulting in their dissociation from SMAD4, nuclear export of the SMADs and termination of the TGF-beta-mediated signaling. Dephosphorylates PRKAA1 and PRKAA2. Plays an important role in the termination of TNF-alpha-mediated NF-kappa-B activation through dephosphorylating and inactivating IKBKB/IKKB. The chain is Protein phosphatase 1A (Ppm1a) from Mus musculus (Mouse).